Here is a 221-residue protein sequence, read N- to C-terminus: Endo-1,4-beta-xylanase A (221 aa).

A signal peptide spans 1 to 16; sequence MKFFATIAALVVGAVA. The GH11 domain maps to 29–221; it reads PMLIERAGPG…GTGSASVTVS (193 aa). The active-site Nucleophile is the Glu114. Glu208 functions as the Proton donor in the catalytic mechanism.

The protein belongs to the glycosyl hydrolase 11 (cellulase G) family.

Its subcellular location is the secreted. The catalysed reaction is Endohydrolysis of (1-&gt;4)-beta-D-xylosidic linkages in xylans.. It participates in glycan degradation; xylan degradation. Endo-1,4-beta-xylanase involved in the hydrolysis of xylan, a major structural heterogeneous polysaccharide found in plant biomass representing the second most abundant polysaccharide in the biosphere, after cellulose. This chain is Endo-1,4-beta-xylanase A (xynA), found in Aureobasidium pullulans (Black yeast).